A 115-amino-acid chain; its full sequence is Large ribosomal subunit protein bL19 (115 aa).

It belongs to the bacterial ribosomal protein bL19 family.

In terms of biological role, this protein is located at the 30S-50S ribosomal subunit interface and may play a role in the structure and function of the aminoacyl-tRNA binding site. This Buchnera aphidicola subsp. Acyrthosiphon pisum (strain Tuc7) protein is Large ribosomal subunit protein bL19.